The sequence spans 1143 residues: Probable ATP-dependent RNA helicase DHX34 (1143 aa).

2 disordered regions span residues 1 to 24 (MPPPRTREGRDRRDHHRAPSEEEA) and 75 to 94 (TSRKEEKDPGQPKHSIPALA). Over residues 76 to 85 (SRKEEKDPGQ) the composition is skewed to basic and acidic residues. Positions 172 to 332 (LQTLKEHQVV…FSNAPVVQVP (161 aa)) constitute a Helicase ATP-binding domain. Position 185-192 (185-192 (GDTGCGKS)) interacts with ATP. The short motif at 279–282 (DEVH) is the DEAH box element. In terms of domain architecture, Helicase C-terminal spans 368 to 536 (SIDHKYPPEE…SLVLQMKSMS (169 aa)). Residues 701–955 (QAAQVGDSYS…LRARWESALD (255 aa)) are negatively regulates interaction with UPF1. The interval 724-766 (LKRQHEEGAGRRRKVLRLQEEQDGGSSDEDRAGPAPPGASDGV) is disordered. Residues Ser749 and Ser750 each carry the phosphoserine modification. A required for phosphorylation of UPF1. Not required for interaction with UPF1 region spans residues 810–1143 (PQLAVPDAFN…EVLRHRKQHV (334 aa)). A required for the interaction with SMG1 and subsequent phosphorylation of UPF1 region spans residues 957 to 1143 (QLAHQAQQQL…EVLRHRKQHV (187 aa)).

This sequence belongs to the DEAD box helicase family. DEAH subfamily. As to quaternary structure, forms a complex with RUVBL1 and RUVBL2. Part of a complex composed of SMG1, DHX34 and UPF1; within the complex DHX34 acts as a scaffolding protein to facilitate SMG1 phosphorylation of UPF1. Interacts with UPF1, MOV10, EIF4A3, XRN2, SMG6, SMG7, SMG9, UPF3A, UPF3B, CASC3/MLN51, XRN1, DIS3 and DCP1A; the interactions are RNA-independent. Interacts with NCBP1/CPB80; the interaction is RNA-dependent. Interacts (via C-terminus) with SMG1; the interaction is RNA-independent. As to expression, expressed in whole blood, testis and spleen. Also expressed in the brain.

The catalysed reaction is ATP + H2O = ADP + phosphate + H(+). In terms of biological role, probable ATP-binding RNA helicase required for nonsense-mediated decay (NMD) degradation of mRNA transcripts containing premature stop codons. Promotes the phosphorylation of UPF1 along with its interaction with key NMD pathway proteins UPF2 and EIF4A3. Interaction with the RUVBL1-RUVBL2 complex results in loss of nucleotide binding ability and ATP hydrolysis of the complex. Negatively regulates the nucleotide binding ability and ATP hydrolysis of the RUVBL1-RUVBL2 complex via induction of N-terminus conformation changes of the RUVBL2 subunits. In Homo sapiens (Human), this protein is Probable ATP-dependent RNA helicase DHX34.